The primary structure comprises 47 residues: Gas vesicle protein A (47 aa).

It belongs to the gas vesicle GvpA family. In terms of assembly, the gas vesicle shell is 2 nm thick and consists of a single layer of this protein. It forms helical ribs nearly perpendicular to the long axis of the vesicle.

Its subcellular location is the gas vesicle shell. Gas vesicles are hollow, gas filled proteinaceous nanostructures found in some microorganisms. During planktonic growth they allow positioning of the organism at a favorable depth for light or nutrient acquisition. GvpA forms the protein shell. The polypeptide is Gas vesicle protein A (Dactylococcopsis salina (Myxobaktron salinum)).